The chain runs to 339 residues: Phosphate acyltransferase (339 aa).

Belongs to the PlsX family. Homodimer. Probably interacts with PlsY.

The protein localises to the cytoplasm. The enzyme catalyses a fatty acyl-[ACP] + phosphate = an acyl phosphate + holo-[ACP]. It functions in the pathway lipid metabolism; phospholipid metabolism. Catalyzes the reversible formation of acyl-phosphate (acyl-PO(4)) from acyl-[acyl-carrier-protein] (acyl-ACP). This enzyme utilizes acyl-ACP as fatty acyl donor, but not acyl-CoA. The polypeptide is Phosphate acyltransferase (Ruthia magnifica subsp. Calyptogena magnifica).